Consider the following 111-residue polypeptide: Photosystem II reaction center Psb28 protein (111 aa).

The protein belongs to the Psb28 family. In terms of assembly, part of the photosystem II complex.

The protein resides in the cellular thylakoid membrane. In Acaryochloris marina (strain MBIC 11017), this protein is Photosystem II reaction center Psb28 protein.